The primary structure comprises 169 residues: Disulfide bond formation protein B (169 aa).

Over 1–13 (MQALNHFSRIRLS) the chain is Cytoplasmic. A helical transmembrane segment spans residues 14-30 (WFLLLLCIIFFEASALT). At 31-48 (FQHIMKLPPCVMCIYERV) the chain is on the periplasmic side. The cysteines at positions 40 and 43 are disulfide-linked. Residues 49 to 64 (AMMGIGGAAIIGLLNP) form a helical membrane-spanning segment. The Cytoplasmic segment spans residues 65 to 71 (NNLIIRW). A helical membrane pass occupies residues 72–89 (CGFIAWGISAGWGLKLAL). The Periplasmic segment spans residues 90-144 (EHVDFQLNPSPFSTCDLFVTFPSWAPLNKWAPWMFEAYGDCSKIVWQFLTLTMPQ). Cysteine 104 and cysteine 130 form a disulfide bridge. The helical transmembrane segment at 145 to 163 (WLVIIFAGNLIALAIFVIA) threads the bilayer. The Cytoplasmic portion of the chain corresponds to 164–169 (QFFNKK).

Belongs to the DsbB family.

The protein resides in the cell inner membrane. In terms of biological role, required for disulfide bond formation in some periplasmic proteins. Acts by oxidizing the DsbA protein. The protein is Disulfide bond formation protein B of Aliivibrio fischeri (strain ATCC 700601 / ES114) (Vibrio fischeri).